The primary structure comprises 75 residues: Small ribosomal subunit protein bS16 (75 aa).

This sequence belongs to the bacterial ribosomal protein bS16 family.

This is Small ribosomal subunit protein bS16 from Helicobacter pylori (strain G27).